A 210-amino-acid polypeptide reads, in one-letter code: Large ribosomal subunit protein uL3 (210 aa).

Belongs to the universal ribosomal protein uL3 family. In terms of assembly, part of the 50S ribosomal subunit. Forms a cluster with proteins L14 and L19.

In terms of biological role, one of the primary rRNA binding proteins, it binds directly near the 3'-end of the 23S rRNA, where it nucleates assembly of the 50S subunit. This Syntrophotalea carbinolica (strain DSM 2380 / NBRC 103641 / GraBd1) (Pelobacter carbinolicus) protein is Large ribosomal subunit protein uL3.